The chain runs to 128 residues: Translation initiation factor 5A (128 aa).

A Hypusine modification is found at K35.

It belongs to the eIF-5A family.

It is found in the cytoplasm. Functionally, functions by promoting the formation of the first peptide bond. The sequence is that of Translation initiation factor 5A (eif5a) from Archaeoglobus fulgidus (strain ATCC 49558 / DSM 4304 / JCM 9628 / NBRC 100126 / VC-16).